The chain runs to 202 residues: Small ribosomal subunit protein uS5 (202 aa).

The segment covering 1–13 (MPGQQRRGGGSGG) has biased composition (gly residues). The segment at 1–31 (MPGQQRRGGGSGGSDRRERRDRSGGGPAQEK) is disordered. The segment covering 14–23 (SDRRERRDRS) has biased composition (basic and acidic residues). The 64-residue stretch at 34-97 (YVERVVAINR…EEAKKHFFKV (64 aa)) folds into the S5 DRBM domain.

Belongs to the universal ribosomal protein uS5 family. As to quaternary structure, part of the 30S ribosomal subunit. Contacts proteins S4 and S8.

In terms of biological role, with S4 and S12 plays an important role in translational accuracy. Functionally, located at the back of the 30S subunit body where it stabilizes the conformation of the head with respect to the body. The chain is Small ribosomal subunit protein uS5 from Parafrankia sp. (strain EAN1pec).